The chain runs to 447 residues: Phosphoglucosamine mutase (447 aa).

S107 serves as the catalytic Phosphoserine intermediate. Residues S107, D246, D248, and D250 each contribute to the Mg(2+) site. S107 carries the phosphoserine modification.

It belongs to the phosphohexose mutase family. Mg(2+) is required as a cofactor. Activated by phosphorylation.

The enzyme catalyses alpha-D-glucosamine 1-phosphate = D-glucosamine 6-phosphate. Its function is as follows. Catalyzes the conversion of glucosamine-6-phosphate to glucosamine-1-phosphate. This chain is Phosphoglucosamine mutase, found in Ralstonia nicotianae (strain ATCC BAA-1114 / GMI1000) (Ralstonia solanacearum).